Here is a 684-residue protein sequence, read N- to C-terminus: UvrABC system protein C (684 aa).

Residues 16–95 enclose the GIY-YIG domain; it reads TDPGVYKFRD…IKRFDPRFNV (80 aa). A UVR domain is found at 208–243; that stretch reads APVRKRVTQRMEEAAENLEFELAARLRDDLGAIDKL. Residues 332 to 352 show a composition bias toward basic and acidic residues; the sequence is EAAEDAKLERRGVDQESHAEP. The tract at residues 332 to 357 is disordered; the sequence is EAAEDAKLERRGVDQESHAEPRQGNA.

The protein belongs to the UvrC family. In terms of assembly, interacts with UvrB in an incision complex.

The protein resides in the cytoplasm. In terms of biological role, the UvrABC repair system catalyzes the recognition and processing of DNA lesions. UvrC both incises the 5' and 3' sides of the lesion. The N-terminal half is responsible for the 3' incision and the C-terminal half is responsible for the 5' incision. In Corynebacterium aurimucosum (strain ATCC 700975 / DSM 44827 / CIP 107346 / CN-1) (Corynebacterium nigricans), this protein is UvrABC system protein C.